Here is a 243-residue protein sequence, read N- to C-terminus: MNVSQDTIYAQASEHISDFQFDNRVAGVFSDMIRRSVPGYTQIINTIGDFADRFVMPNTQIYDLGCSLGAATLSIRRQIQGRQCRIIAVDNSESMVARCQENLNAYVSDTDVDLVCGDIRDIDIQNASLVVLNFTLQFLPPEDRETLIAKIYQGLNPGGILVLSEKIRFEDAPIQTLLEEQHLDFKRANGYSELEISQKRSALENVMKPDTLITHQQRLTSQGFSHFSLWFQCFNFASMVAIK.

S-adenosyl-L-methionine contacts are provided by residues Tyr-40, Gly-65–Ser-67, Asp-90–Asn-91, Asp-118–Ile-119, Asn-133, and Arg-200.

It belongs to the class I-like SAM-binding methyltransferase superfamily. Cx-SAM synthase family. As to quaternary structure, homodimer.

The enzyme catalyses prephenate + S-adenosyl-L-methionine = carboxy-S-adenosyl-L-methionine + 3-phenylpyruvate + H2O. Catalyzes the conversion of S-adenosyl-L-methionine (SAM) to carboxy-S-adenosyl-L-methionine (Cx-SAM). The protein is Carboxy-S-adenosyl-L-methionine synthase of Shewanella baltica (strain OS223).